A 545-amino-acid polypeptide reads, in one-letter code: Glucose-6-phosphate isomerase (545 aa).

E351 (proton donor) is an active-site residue. Residues H382 and K510 contribute to the active site.

The protein belongs to the GPI family.

The protein resides in the cytoplasm. The catalysed reaction is alpha-D-glucose 6-phosphate = beta-D-fructose 6-phosphate. The protein operates within carbohydrate biosynthesis; gluconeogenesis. It functions in the pathway carbohydrate degradation; glycolysis; D-glyceraldehyde 3-phosphate and glycerone phosphate from D-glucose: step 2/4. In terms of biological role, catalyzes the reversible isomerization of glucose-6-phosphate to fructose-6-phosphate. In Shewanella baltica (strain OS195), this protein is Glucose-6-phosphate isomerase.